The sequence spans 488 residues: Aspartyl/glutamyl-tRNA(Asn/Gln) amidotransferase subunit B (488 aa).

The protein belongs to the GatB/GatE family. GatB subfamily. In terms of assembly, heterotrimer of A, B and C subunits.

The enzyme catalyses L-glutamyl-tRNA(Gln) + L-glutamine + ATP + H2O = L-glutaminyl-tRNA(Gln) + L-glutamate + ADP + phosphate + H(+). It carries out the reaction L-aspartyl-tRNA(Asn) + L-glutamine + ATP + H2O = L-asparaginyl-tRNA(Asn) + L-glutamate + ADP + phosphate + 2 H(+). Functionally, allows the formation of correctly charged Asn-tRNA(Asn) or Gln-tRNA(Gln) through the transamidation of misacylated Asp-tRNA(Asn) or Glu-tRNA(Gln) in organisms which lack either or both of asparaginyl-tRNA or glutaminyl-tRNA synthetases. The reaction takes place in the presence of glutamine and ATP through an activated phospho-Asp-tRNA(Asn) or phospho-Glu-tRNA(Gln). The chain is Aspartyl/glutamyl-tRNA(Asn/Gln) amidotransferase subunit B from Ralstonia nicotianae (strain ATCC BAA-1114 / GMI1000) (Ralstonia solanacearum).